The sequence spans 345 residues: Phosphoribosylformylglycinamidine cyclo-ligase (345 aa).

It belongs to the AIR synthase family.

The protein localises to the cytoplasm. It carries out the reaction 2-formamido-N(1)-(5-O-phospho-beta-D-ribosyl)acetamidine + ATP = 5-amino-1-(5-phospho-beta-D-ribosyl)imidazole + ADP + phosphate + H(+). The protein operates within purine metabolism; IMP biosynthesis via de novo pathway; 5-amino-1-(5-phospho-D-ribosyl)imidazole from N(2)-formyl-N(1)-(5-phospho-D-ribosyl)glycinamide: step 2/2. This Pasteurella multocida (strain Pm70) protein is Phosphoribosylformylglycinamidine cyclo-ligase.